Consider the following 188-residue polypeptide: Cytochrome b-245 chaperone 1 homolog (188 aa).

A helical membrane pass occupies residues 20–42 (SIRSWSLLVGILSVGLAAAYYST).

This sequence belongs to the CYBC1 family.

The protein localises to the endoplasmic reticulum membrane. In terms of biological role, functions as a chaperone necessary for a stable expression of the CYBA and CYBB subunits of the cytochrome b-245 heterodimer. The sequence is that of Cytochrome b-245 chaperone 1 homolog (cybc1) from Xenopus laevis (African clawed frog).